The primary structure comprises 97 residues: Large ribosomal subunit protein bL25 (97 aa).

Belongs to the bacterial ribosomal protein bL25 family. Part of the 50S ribosomal subunit; part of the 5S rRNA/L5/L18/L25 subcomplex. Contacts the 5S rRNA. Binds to the 5S rRNA independently of L5 and L18.

In terms of biological role, this is one of the proteins that binds to the 5S RNA in the ribosome where it forms part of the central protuberance. The chain is Large ribosomal subunit protein bL25 from Buchnera aphidicola subsp. Baizongia pistaciae (strain Bp).